Consider the following 290-residue polypeptide: 4-hydroxy-tetrahydrodipicolinate synthase (290 aa).

A pyruvate-binding site is contributed by Thr44. The Proton donor/acceptor role is filled by Tyr132. The active-site Schiff-base intermediate with substrate is the Lys160. Ile202 serves as a coordination point for pyruvate.

It belongs to the DapA family. In terms of assembly, homotetramer; dimer of dimers.

The protein resides in the cytoplasm. The catalysed reaction is L-aspartate 4-semialdehyde + pyruvate = (2S,4S)-4-hydroxy-2,3,4,5-tetrahydrodipicolinate + H2O + H(+). The protein operates within amino-acid biosynthesis; L-lysine biosynthesis via DAP pathway; (S)-tetrahydrodipicolinate from L-aspartate: step 3/4. Its function is as follows. Catalyzes the condensation of (S)-aspartate-beta-semialdehyde [(S)-ASA] and pyruvate to 4-hydroxy-tetrahydrodipicolinate (HTPA). The sequence is that of 4-hydroxy-tetrahydrodipicolinate synthase from Alkaliphilus oremlandii (strain OhILAs) (Clostridium oremlandii (strain OhILAs)).